The following is a 495-amino-acid chain: Divinyl ether synthase CYP74M3 (495 aa).

Cys446 is a binding site for heme.

This sequence belongs to the cytochrome P450 family. Heme is required as a cofactor.

The enzyme catalyses (13S)-hydroperoxy-(9Z,11E)-octadecadienoate = etheroleate + H2O. It carries out the reaction (13S)-hydroperoxy-(9Z,11E,15Z)-octadecatrienoate = etherolenate + H2O. It functions in the pathway lipid metabolism; oxylipin biosynthesis. Divinyl ether synthase involved in oxylipin biosynthesis. Catalyzes the conversion of (13S)-hydroperoxy-(9Z,11E)-octadecadienoate (13-HPOD) to etheroleate and (13S)-hydroperoxy-(9Z,11E,15Z)-octadecatrienoate (13-HPOT) to etherolenate. Has no activity with the corresponding 9-hydroperoxides (9-HPOD and 9-HPOT). The protein is Divinyl ether synthase CYP74M3 of Selaginella moellendorffii (Spikemoss).